The following is a 353-amino-acid chain: Ornithine racemase (353 aa).

Lys-35 acts as the Proton acceptor in catalysis. N6-(pyridoxal phosphate)lysine is present on Lys-35. Arg-128 contributes to the substrate binding site.

Belongs to the alanine racemase family. In terms of assembly, homodimer. The cofactor is pyridoxal 5'-phosphate.

It catalyses the reaction L-ornithine = D-ornithine. Its function is as follows. Involved in the ornithine fermentation pathway. Catalyzes the conversion of L-ornithine to D-ornithine. OR could also racemize basic amino acids such as lysine and arginine. Serine, asparagine and alanine could be also converted by OR, but at a lower rate. In Acetoanaerobium sticklandii (strain ATCC 12662 / DSM 519 / JCM 1433 / CCUG 9281 / NCIMB 10654 / HF) (Clostridium sticklandii), this protein is Ornithine racemase.